A 314-amino-acid polypeptide reads, in one-letter code: Small ribosomal subunit protein uS2 (314 aa).

Composition is skewed to basic and acidic residues over residues 244–265 and 271–287; these read GGHD…GHKD and DRRG…EDRA. The disordered stretch occupies residues 244–314; the sequence is GGHDERREQE…AAPEAAPAKE (71 aa). Residues 302-314 are compositionally biased toward low complexity; sequence APAAAPEAAPAKE.

Belongs to the universal ribosomal protein uS2 family.

This chain is Small ribosomal subunit protein uS2, found in Anaeromyxobacter dehalogenans (strain 2CP-C).